The following is a 222-amino-acid chain: UPF0316 protein Mboo_0791 (222 aa).

3 consecutive transmembrane segments (helical) span residues 25 to 45, 67 to 87, and 93 to 113; these read FFLF…IFLA, LAPV…VGVL, and IAYF…GLVI.

The protein belongs to the UPF0316 family.

It localises to the cell membrane. In Methanoregula boonei (strain DSM 21154 / JCM 14090 / 6A8), this protein is UPF0316 protein Mboo_0791.